The chain runs to 1400 residues: DNA-directed RNA polymerase subunit beta' (1400 aa).

Cys-70, Cys-72, Cys-85, and Cys-88 together coordinate Zn(2+). Residues Asp-460, Asp-462, and Asp-464 each contribute to the Mg(2+) site. Positions 814, 888, 895, and 898 each coordinate Zn(2+). Residues 1367–1400 form a disordered region; the sequence is DRQAKRAEAQEGPSAEQATDNLAALLNAGFSSDE.

It belongs to the RNA polymerase beta' chain family. In terms of assembly, the RNAP catalytic core consists of 2 alpha, 1 beta, 1 beta' and 1 omega subunit. When a sigma factor is associated with the core the holoenzyme is formed, which can initiate transcription. The cofactor is Mg(2+). Requires Zn(2+) as cofactor.

The enzyme catalyses RNA(n) + a ribonucleoside 5'-triphosphate = RNA(n+1) + diphosphate. DNA-dependent RNA polymerase catalyzes the transcription of DNA into RNA using the four ribonucleoside triphosphates as substrates. This is DNA-directed RNA polymerase subunit beta' from Vibrio campbellii (strain ATCC BAA-1116).